A 434-amino-acid chain; its full sequence is Sensor histidine kinase Hik2 (434 aa).

The GAF domain maps to Ile16 to Ala152. Cys19 contacts [3Fe-4S] cluster. One can recognise a Histidine kinase domain in the interval Asp182–Glu432. At His185 the chain carries Phosphohistidine; by autocatalysis. Residues Asp357 to Gly361 carry the G1 box motif. Residues Gly386 to Gly390 carry the G2 box motif.

The protein belongs to the chloroplast sensor kinase protein family. In terms of assembly, exists as monomers, tetramers, hexamers and other higher-order oligomers; all are able to autophosphorylate. Upon treatment with 0.5 M NaCl only tetramers are seen, which are probably inactive. Interacts with both RppA and Rre1. Requires [3Fe-4S] cluster as cofactor. Post-translationally, autophosphorylates, probably on His-185.

The protein localises to the cytoplasm. It carries out the reaction ATP + protein L-histidine = ADP + protein N-phospho-L-histidine.. Its activity is regulated as follows. Autophosphorylation is inhibited by Na(+) but not by Cl(-). Reducing agents dithionite, duroquinol and decyl-plastoquinone, but not NADPH or ferredoxin inhibit autophosphorylation. Oxidation of the Fe-S cluster (with potassium ferricyanide) induces a conformational change that is conducive to its autophosphorylation activity. In terms of biological role, member of possibly 2 two-component regulatory system(s) Hik2/Rre1 and Hik2/RppA. Transduces PQ (plastoquinone) redox signals to photosystem gene expression machinery during the adjustment of photosystem stoichiometry. Reduced PQ suppresses its autophosphorylation activity (i.e. kinase activity is higher under oxidizing conditions). Member of two-component regulatory system Hik2/Rre1, controls expression of sigB (sll0306), sll0528, slr1119, slr0852 and ssr3188 in response to hyperosmotic stress. Activity responds to high salt (with a linear response as concentrations rise to 0.5 M NaCl); detects Cl(-) levels. Autophosphorylates and transfers phosphate to Rre1. May transfer phosphate to RppA in a possible Hik2/RppA two-component system. This chain is Sensor histidine kinase Hik2, found in Synechocystis sp. (strain ATCC 27184 / PCC 6803 / Kazusa).